Reading from the N-terminus, the 183-residue chain is Probable RNA 2'-phosphotransferase (183 aa).

It belongs to the KptA/TPT1 family.

Its function is as follows. Removes the 2'-phosphate from RNA via an intermediate in which the phosphate is ADP-ribosylated by NAD followed by a presumed transesterification to release the RNA and generate ADP-ribose 1''-2''-cyclic phosphate (APPR&gt;P). May function as an ADP-ribosylase. The polypeptide is Probable RNA 2'-phosphotransferase (Pyrococcus furiosus (strain ATCC 43587 / DSM 3638 / JCM 8422 / Vc1)).